We begin with the raw amino-acid sequence, 291 residues long: Phosphate-binding protein PstS 2 (291 aa).

The signal sequence occupies residues 1 to 21; the sequence is MKFKKMLTLAAIGLSGFGLVA. C22 carries the N-palmitoyl cysteine lipid modification. C22 carries the S-diacylglycerol cysteine lipid modification.

It belongs to the PstS family. As to quaternary structure, the complex is composed of two ATP-binding proteins (PstB), two transmembrane proteins (PstC and PstA) and a solute-binding protein (PstS).

Its subcellular location is the cell membrane. Its function is as follows. Part of the ABC transporter complex PstSACB involved in phosphate import. This Streptococcus pneumoniae serotype 4 (strain ATCC BAA-334 / TIGR4) protein is Phosphate-binding protein PstS 2 (pstS2).